The chain runs to 253 residues: Probable U3 small nucleolar RNA-associated protein 11 (253 aa).

The interval Met1–Gln21 is disordered. Residues Lys74, Lys83, and Lys86 each participate in a glycyl lysine isopeptide (Lys-Gly) (interchain with G-Cter in SUMO2) cross-link. Phosphothreonine is present on Thr90. Residues Lys103, Lys120, Lys143, Lys144, Lys180, Lys211, Lys218, Lys235, and Lys236 each participate in a glycyl lysine isopeptide (Lys-Gly) (interchain with G-Cter in SUMO2) cross-link. Phosphoserine is present on Ser241. Lys246 participates in a covalent cross-link: Glycyl lysine isopeptide (Lys-Gly) (interchain with G-Cter in SUMO2).

The protein belongs to the UTP11 family. As to quaternary structure, part of the small subunit (SSU) processome, composed of more than 70 proteins and the RNA chaperone small nucleolar RNA (snoRNA) U3.

The protein resides in the nucleus. It localises to the nucleolus. Its function is as follows. Part of the small subunit (SSU) processome, first precursor of the small eukaryotic ribosomal subunit. During the assembly of the SSU processome in the nucleolus, many ribosome biogenesis factors, an RNA chaperone and ribosomal proteins associate with the nascent pre-rRNA and work in concert to generate RNA folding, modifications, rearrangements and cleavage as well as targeted degradation of pre-ribosomal RNA by the RNA exosome. Involved in nucleolar processing of pre-18S ribosomal RNA. The protein is Probable U3 small nucleolar RNA-associated protein 11 of Rattus norvegicus (Rat).